An 887-amino-acid chain; its full sequence is MSKSSRIRMKSRTRYLIAILLVISLCSKASSHDDEKKKKGVTYDGTSLIINGKRELLFSGSVHYPRSTPHMWPSIIDKARIGGLNTIQTYVFWNVHEPEQGKYDFKGRFDLVKFIKLIHEKGLYVTLRLGPFIQAEWNHGGLPYWLREVPDVYFRTNNEPFKEHTERYVRKILGMMKEEKLFASQGGPIILGQIENEYNAVQLAYKENGEKYIKWAANLVESMNLGIPWVMCKQNDAPGNLINACNGRHCGDTFPGPNRHDKPSLWTENWTTQFRVFGDPPTQRTVEDIAFSVARYFSKNGSHVNYYMYHGGTNFGRTSAHFVTTRYYDDAPLDEFGLEKAPKYGHLKHVHRALRLCKKALFWGQLRAQTLGPDTEVRYYEQPGTKVCAAFLSNNNTRDTNTIKFKGQDYVLPSRSISILPDCKTVVYNTAQIVAQHSWRDFVKSEKTSKGLKFEMFSENIPSLLDGDSLIPGELYYLTKDKTDYAWYTTSVKIDEDDFPDQKGLKTILRVASLGHALIVYVNGEYAGKAHGRHEMKSFEFAKPVNFKTGDNRISILGVLTGLPDSGSYMEHRFAGPRAISIIGLKSGTRDLTENNEWGHLAGLEGEKKEVYTEEGSKKVKWEKDGKRKPLTWYKTYFETPEGVNAVAIRMKAMGKGLIWVNGIGVGRYWMSFLSPLGEPTQTEYHIPRSFMKGEKKKNMLVILEEEPGVKLESIDFVLVNRDTICSNVGEDYPVSVKSWKREGPKIVSRSKDMRLKAVMRCPPEKQMVEVQFASFGDPTGTCGNFTMGKCSASKSKEVVEKECLGRNYCSIVVARETFGDKGCPEIVKTLAVQVKCEKKEGKQDEKKKKEDKDEEEEDDEDDDEEEEEEDKENKDTKDMENKNQDM.

The N-terminal stretch at 1 to 31 (MSKSSRIRMKSRTRYLIAILLVISLCSKASS) is a signal peptide. Residue Glu-197 is the Proton donor of the active site. Glu-268 acts as the Nucleophile in catalysis. N-linked (GlcNAc...) asparagine glycosylation is found at Asn-269, Asn-300, Asn-395, and Asn-785. In terms of domain architecture, SUEL-type lectin spans 752–838 (KDMRLKAVMR…KTLAVQVKCE (87 aa)). Residues 838 to 852 (EKKEGKQDEKKKKED) are compositionally biased toward basic and acidic residues. The disordered stretch occupies residues 838-887 (EKKEGKQDEKKKKEDKDEEEEDDEDDDEEEEEEDKENKDTKDMENKNQDM). A compositionally biased stretch (acidic residues) spans 853-871 (KDEEEEDDEDDDEEEEEED). Positions 872–887 (KENKDTKDMENKNQDM) are enriched in basic and acidic residues.

It belongs to the glycosyl hydrolase 35 family.

Its subcellular location is the secreted. The protein localises to the extracellular space. It localises to the apoplast. The enzyme catalyses Hydrolysis of terminal non-reducing beta-D-galactose residues in beta-D-galactosides.. The polypeptide is Beta-galactosidase 14 (BGAL14) (Arabidopsis thaliana (Mouse-ear cress)).